An 87-amino-acid chain; its full sequence is Small ribosomal subunit protein bS20 (87 aa).

The tract at residues 1–24 (MANTAQARKRARQSVERNKHNSSL) is disordered.

Belongs to the bacterial ribosomal protein bS20 family.

Binds directly to 16S ribosomal RNA. The chain is Small ribosomal subunit protein bS20 from Bordetella petrii (strain ATCC BAA-461 / DSM 12804 / CCUG 43448).